The chain runs to 350 residues: tRNA uridine(34) hydroxylase (350 aa).

One can recognise a Rhodanese domain in the interval 146–240 (DDPDALFIDM…YARKAREQGL (95 aa)). Cysteine 200 (cysteine persulfide intermediate) is an active-site residue.

It belongs to the TrhO family.

The enzyme catalyses uridine(34) in tRNA + AH2 + O2 = 5-hydroxyuridine(34) in tRNA + A + H2O. Its function is as follows. Catalyzes oxygen-dependent 5-hydroxyuridine (ho5U) modification at position 34 in tRNAs, the first step in 5-carboxymethoxyuridine (cmo5U) biosynthesis. May be part of an alternate pathway, which is able to bypass cmo5U biogenesis in a subset of tRNAs under aerobic conditions. The polypeptide is tRNA uridine(34) hydroxylase (Escherichia coli (strain K12)).